Consider the following 519-residue polypeptide: Cytochrome P450 52E1 (519 aa).

The next 2 membrane-spanning stretches (helical) occupy residues 10-30 (ALGG…FYFI) and 44-64 (VIVF…TAML). Cys479 is a heme binding site.

Belongs to the cytochrome P450 family. Heme serves as cofactor.

The protein resides in the membrane. Functionally, together with an NADPH cytochrome P450 the enzyme system catalyzes the terminal hydroxylation as the first step in the assimilation of alkanes and fatty acids. This Candida apicola (Yeast) protein is Cytochrome P450 52E1 (CYP52E1).